A 564-amino-acid chain; its full sequence is Esterase FE4 (564 aa).

The signal sequence occupies residues 1-23 (MKNTCGILLNLFLFIGCFLTCSA). A glycan (N-linked (GlcNAc...) asparagine) is linked at asparagine 81. A disulfide bridge connects residues cysteine 89 and cysteine 106. Serine 214 (acyl-ester intermediate) is an active-site residue. Cysteines 266 and 277 form a disulfide. An N-linked (GlcNAc...) asparagine glycan is attached at asparagine 269. Glutamate 339 serves as the catalytic Charge relay system. N-linked (GlcNAc...) asparagine glycans are attached at residues asparagine 371, asparagine 404, and asparagine 443. Histidine 463 (charge relay system) is an active-site residue.

The protein belongs to the type-B carboxylesterase/lipase family.

The enzyme catalyses a carboxylic ester + H2O = an alcohol + a carboxylate + H(+). Its function is as follows. Overproduction of nonspecific esterases is a common mechanism of resistance to organophosphate insecticides. This is Esterase FE4 from Myzus persicae (Green peach aphid).